The chain runs to 577 residues: Cytidine monophosphate-N-acetylneuraminic acid hydroxylase (577 aa).

A propeptide spanning residues 1–4 is cleaved from the precursor; it reads MMDR. The Rieske domain occupies 14 to 112; that stretch reads LSPAEVANLK…IEMDENNGLS (99 aa). [2Fe-2S] cluster contacts are provided by C54, H56, C75, and H78.

The protein belongs to the CMP-Neu5Ac hydroxylase family. It depends on [2Fe-2S] cluster as a cofactor. In terms of tissue distribution, expressed in all tissues tested, except in brain.

It is found in the cytoplasm. The protein resides in the endoplasmic reticulum. It carries out the reaction CMP-N-acetyl-beta-neuraminate + 2 Fe(II)-[cytochrome b5] + O2 + 2 H(+) = CMP-N-glycoloyl-beta-neuraminate + 2 Fe(III)-[cytochrome b5] + H2O. It participates in amino-sugar metabolism; N-acetylneuraminate metabolism. In terms of biological role, sialic acids are components of carbohydrate chains of glycoconjugates and are involved in cell-cell recognition and cell-pathogen interactions. Catalyzes the conversion of CMP-N-acetylneuraminic acid (CMP-Neu5Ac) into its hydroxylated derivative CMP-N-glycolylneuraminic acid (CMP-Neu5Gc), a sialic acid abundantly expressed at the surface of many cells. This Mus musculus (Mouse) protein is Cytidine monophosphate-N-acetylneuraminic acid hydroxylase (Cmah).